The chain runs to 418 residues: Putative FBD-associated F-box protein At5g56560 (418 aa).

Residues 4-60 (QTRLSDLPDELLLKILSALPMFKVTLATRLISRRWKGPWKLVPDVTFDDDDIPFKSF) form the F-box domain. The FBD domain maps to 340-390 (LWEEPAVVAKCLSEHLEIFEWRQYEGTEQERNVAGYILANATCLKMATFST).

This Arabidopsis thaliana (Mouse-ear cress) protein is Putative FBD-associated F-box protein At5g56560.